The following is a 427-amino-acid chain: Glutamate-1-semialdehyde 2,1-aminomutase (427 aa).

K265 carries the N6-(pyridoxal phosphate)lysine modification.

This sequence belongs to the class-III pyridoxal-phosphate-dependent aminotransferase family. HemL subfamily. As to quaternary structure, homodimer. Pyridoxal 5'-phosphate is required as a cofactor.

Its subcellular location is the cytoplasm. The catalysed reaction is (S)-4-amino-5-oxopentanoate = 5-aminolevulinate. The protein operates within porphyrin-containing compound metabolism; protoporphyrin-IX biosynthesis; 5-aminolevulinate from L-glutamyl-tRNA(Glu): step 2/2. The polypeptide is Glutamate-1-semialdehyde 2,1-aminomutase (Burkholderia ambifaria (strain MC40-6)).